The sequence spans 105 residues: Acylphosphatase (105 aa).

Residues 16 to 105 (RLTAWVRGRV…RGGYSGFTQA (90 aa)) enclose the Acylphosphatase-like domain. Active-site residues include Arg31 and Asn49.

This sequence belongs to the acylphosphatase family.

The catalysed reaction is an acyl phosphate + H2O = a carboxylate + phosphate + H(+). This chain is Acylphosphatase (acyP), found in Acidothermus cellulolyticus (strain ATCC 43068 / DSM 8971 / 11B).